Reading from the N-terminus, the 27-residue chain is SCLSSGALCGIDSNCCNGCNVPRNQCY.

3 disulfide bridges follow: C2–C16, C9–C19, and C15–C26. At Y27 the chain carries Tyrosine amide.

As to expression, expressed by the venom duct.

It is found in the secreted. In terms of biological role, 1 uM of this toxin does not show any effect on voltage-gated sodium and potassium channels. Does not show antibacterial activity on both Gram-negative and Gram-positive bacteria. This is Conotoxin Lo6/7b from Conasprella longurionis (Cone snail).